Reading from the N-terminus, the 653-residue chain is Asparagine--tRNA ligase, cytoplasmic (653 aa).

This sequence belongs to the class-II aminoacyl-tRNA synthetase family.

The protein resides in the cytoplasm. It catalyses the reaction tRNA(Asn) + L-asparagine + ATP = L-asparaginyl-tRNA(Asn) + AMP + diphosphate + H(+). The polypeptide is Asparagine--tRNA ligase, cytoplasmic (asnS1) (Dictyostelium discoideum (Social amoeba)).